The following is a 260-amino-acid chain: Ribosomal RNA small subunit methyltransferase A (260 aa).

Residues Leu-23, Gly-48, Glu-69, Asp-94, and Asn-110 each contribute to the S-adenosyl-L-methionine site.

It belongs to the class I-like SAM-binding methyltransferase superfamily. rRNA adenine N(6)-methyltransferase family. RsmA subfamily.

It localises to the cytoplasm. It catalyses the reaction adenosine(1518)/adenosine(1519) in 16S rRNA + 4 S-adenosyl-L-methionine = N(6)-dimethyladenosine(1518)/N(6)-dimethyladenosine(1519) in 16S rRNA + 4 S-adenosyl-L-homocysteine + 4 H(+). In terms of biological role, specifically dimethylates two adjacent adenosines (A1518 and A1519) in the loop of a conserved hairpin near the 3'-end of 16S rRNA in the 30S particle. May play a critical role in biogenesis of 30S subunits. The chain is Ribosomal RNA small subunit methyltransferase A from Thermotoga petrophila (strain ATCC BAA-488 / DSM 13995 / JCM 10881 / RKU-1).